The chain runs to 470 residues: AAA-ATPase At5g40000 (470 aa).

An N-terminal signal peptide occupies residues 1–30 (MMMMGDSFGSIGSSMASLFFLWATIQQIFP). 248-255 (GPPGTGKS) serves as a coordination point for ATP.

The protein belongs to the AAA ATPase family. BCS1 subfamily. Mg(2+) is required as a cofactor.

The enzyme catalyses ATP + H2O = ADP + phosphate + H(+). This Arabidopsis thaliana (Mouse-ear cress) protein is AAA-ATPase At5g40000.